A 424-amino-acid chain; its full sequence is UPF0597 protein SO_1403 (424 aa).

The protein belongs to the UPF0597 family.

In Shewanella oneidensis (strain ATCC 700550 / JCM 31522 / CIP 106686 / LMG 19005 / NCIMB 14063 / MR-1), this protein is UPF0597 protein SO_1403.